The primary structure comprises 355 residues: MSGISAQLVKKLRDLTDAGMMDCKKALVEVAGDLQKAIDFLREKGLSKAAKKADRIAAEGVVALEVAPDFKSAMIVEINSETDFVAKNEGFKELVKKTLETIKAHNIHTTEELLKSPLDNKPFEEYLHSQIAVIGENILVRKIAHLKAPSSHIINGYAHSNARVGVLIGIKYDNEKNAPKVVELARNIAMHAAAMKPQVLDCKDFSLDFVKKETLALIAEIEKDNEEAKRLGKPLKNIPTFGSRIELSDEVLAHQKKAFEDELKAQGKPEKIWDKIVPGKMERFIADNTLIDQRLTLLGQFYVMDDKKTIAQVVADCSKEWNDDLKITEYVRFELGEGIEKKAENFAEEVALQMK.

The tract at residues 82–85 (TDFV) is involved in Mg(2+) ion dislocation from EF-Tu.

The protein belongs to the EF-Ts family.

The protein resides in the cytoplasm. Functionally, associates with the EF-Tu.GDP complex and induces the exchange of GDP to GTP. It remains bound to the aminoacyl-tRNA.EF-Tu.GTP complex up to the GTP hydrolysis stage on the ribosome. The chain is Elongation factor Ts (tsf) from Helicobacter pylori (strain ATCC 700392 / 26695) (Campylobacter pylori).